The chain runs to 717 residues: Ribosomal RNA large subunit methyltransferase K/L (717 aa).

One can recognise a THUMP domain in the interval 45–142; sequence GAYRICLGSR…DKRSGVQTVQ (98 aa).

The protein belongs to the methyltransferase superfamily. RlmKL family.

The protein localises to the cytoplasm. The catalysed reaction is guanosine(2445) in 23S rRNA + S-adenosyl-L-methionine = N(2)-methylguanosine(2445) in 23S rRNA + S-adenosyl-L-homocysteine + H(+). The enzyme catalyses guanosine(2069) in 23S rRNA + S-adenosyl-L-methionine = N(2)-methylguanosine(2069) in 23S rRNA + S-adenosyl-L-homocysteine + H(+). Functionally, specifically methylates the guanine in position 2445 (m2G2445) and the guanine in position 2069 (m7G2069) of 23S rRNA. This Hahella chejuensis (strain KCTC 2396) protein is Ribosomal RNA large subunit methyltransferase K/L.